A 120-amino-acid polypeptide reads, in one-letter code: Ribosome-binding factor A (120 aa).

The protein belongs to the RbfA family. In terms of assembly, monomer. Binds 30S ribosomal subunits, but not 50S ribosomal subunits or 70S ribosomes.

The protein resides in the cytoplasm. Its function is as follows. One of several proteins that assist in the late maturation steps of the functional core of the 30S ribosomal subunit. Associates with free 30S ribosomal subunits (but not with 30S subunits that are part of 70S ribosomes or polysomes). Required for efficient processing of 16S rRNA. May interact with the 5'-terminal helix region of 16S rRNA. This chain is Ribosome-binding factor A, found in Chlamydia abortus (strain DSM 27085 / S26/3) (Chlamydophila abortus).